We begin with the raw amino-acid sequence, 299 residues long: GTPase Era (299 aa).

The Era-type G domain occupies 4–171; sequence KSGFVAILGR…MEILKENLDE (168 aa). A G1 region spans residues 12–19; the sequence is GRPNVGKS. Residue 12-19 coordinates GTP; that stretch reads GRPNVGKS. The G2 stretch occupies residues 38 to 42; sequence QTTRN. Positions 59–62 are G3; sequence DTPG. GTP is bound by residues 59–63 and 121–124; these read DTPGI and NKID. The G4 stretch occupies residues 121–124; the sequence is NKID. The interval 150 to 152 is G5; it reads ISA. One can recognise a KH type-2 domain in the interval 202–280; sequence TREEIPHSVA…FLETWVKVKK (79 aa).

The protein belongs to the TRAFAC class TrmE-Era-EngA-EngB-Septin-like GTPase superfamily. Era GTPase family. In terms of assembly, monomer.

The protein resides in the cytoplasm. It localises to the cell membrane. Its function is as follows. An essential GTPase that binds both GDP and GTP, with rapid nucleotide exchange. Plays a role in 16S rRNA processing and 30S ribosomal subunit biogenesis and possibly also in cell cycle regulation and energy metabolism. This is GTPase Era from Streptococcus suis (strain 98HAH33).